The sequence spans 509 residues: Dihydrolipoyl dehydrogenase, mitochondrial (509 aa).

Residues 1–35 (MQSWSRVYCSLAKKGHFNRLSHGLQGASSVPLRTY) constitute a mitochondrion transit peptide. An N6-acetyllysine; alternate modification is found at Lys66. Lys66 carries the post-translational modification N6-succinyllysine; alternate. Residues 71–80 (EKNETLGGTC) and Lys89 each bind FAD. A disulfide bridge connects residues Cys80 and Cys85. An N6-acetyllysine; alternate mark is found at Lys104, Lys122, Lys132, and Lys143. An N6-succinyllysine; alternate mark is found at Lys104, Lys122, Lys132, and Lys143. Residue Gly154 participates in FAD binding. Lys159 is subject to N6-succinyllysine. Residue 183–185 (TGS) participates in FAD binding. Residues 220–227 (GAGVIGVE) and Glu243 contribute to the NAD(+) site. Lys273 and Lys277 each carry N6-succinyllysine. Position 278 (Val278) interacts with NAD(+). 2 positions are modified to phosphoserine: Ser285 and Ser297. Residue Gly314 participates in NAD(+) binding. N6-acetyllysine is present on Lys346. FAD contacts are provided by residues Asp355 and 361–364 (MLAH). Lys410 is subject to N6-acetyllysine; alternate. Lys410 is modified (N6-succinyllysine; alternate). Residues Lys417 and Lys420 each carry the N6-acetyllysine modification. An N6-succinyllysine modification is found at Lys430. The active-site Proton acceptor is the His487. Position 502 is a phosphoserine (Ser502). Residue Lys505 is modified to N6-acetyllysine; alternate. Position 505 is an N6-succinyllysine; alternate (Lys505).

It belongs to the class-I pyridine nucleotide-disulfide oxidoreductase family. As to quaternary structure, homodimer. Part of the multimeric pyruvate dehydrogenase complex that contains multiple copies of pyruvate dehydrogenase (subunits PDHA (PDHA1 or PDHA2) and PDHB, E1), dihydrolipoamide acetyltransferase (DLAT, E2) and lipoamide dehydrogenase (DLD, E3). These subunits are bound to an inner core composed of about 48 DLAT and 12 PDHX molecules (by non covalent bonds). The 2-oxoglutarate dehydrogenase complex is composed of OGDH (2-oxoglutarate dehydrogenase; E1), DLST (dihydrolipoamide succinyltransferase; E2), DLD (dihydrolipoamide dehydrogenase; E3) and the assembly factor KGD4. It contains multiple copies of the three enzymatic components (E1, E2 and E3). In the nucleus, the 2-oxoglutarate dehydrogenase complex associates with KAT2A. Interacts with PDHX. It depends on FAD as a cofactor. Tyrosine phosphorylated.

Its subcellular location is the mitochondrion matrix. The protein resides in the nucleus. It localises to the cell projection. The protein localises to the cilium. It is found in the flagellum. Its subcellular location is the cytoplasmic vesicle. The protein resides in the secretory vesicle. It localises to the acrosome. The enzyme catalyses N(6)-[(R)-dihydrolipoyl]-L-lysyl-[protein] + NAD(+) = N(6)-[(R)-lipoyl]-L-lysyl-[protein] + NADH + H(+). Lipoamide dehydrogenase is a component of the glycine cleavage system as well as an E3 component of three alpha-ketoacid dehydrogenase complexes (pyruvate-, alpha-ketoglutarate-, and branched-chain amino acid-dehydrogenase complex). The 2-oxoglutarate dehydrogenase complex is mainly active in the mitochondrion. A fraction of the 2-oxoglutarate dehydrogenase complex also localizes in the nucleus and is required for lysine succinylation of histones: associates with KAT2A on chromatin and provides succinyl-CoA to histone succinyltransferase KAT2A. In monomeric form may have additional moonlighting function as serine protease. Involved in the hyperactivation of spermatazoa during capacitation and in the spermatazoal acrosome reaction. This Rattus norvegicus (Rat) protein is Dihydrolipoyl dehydrogenase, mitochondrial (Dld).